The sequence spans 82 residues: Small ribosomal subunit protein bS16 (82 aa).

It belongs to the bacterial ribosomal protein bS16 family.

The polypeptide is Small ribosomal subunit protein bS16 (Francisella tularensis subsp. tularensis (strain FSC 198)).